The following is a 156-amino-acid chain: tRNA (cytidine(34)-2'-O)-methyltransferase (156 aa).

Residues Gly102, Leu124, and Ser132 each contribute to the S-adenosyl-L-methionine site.

Belongs to the class IV-like SAM-binding methyltransferase superfamily. RNA methyltransferase TrmH family. TrmL subfamily. As to quaternary structure, homodimer.

It localises to the cytoplasm. The catalysed reaction is cytidine(34) in tRNA + S-adenosyl-L-methionine = 2'-O-methylcytidine(34) in tRNA + S-adenosyl-L-homocysteine + H(+). It carries out the reaction 5-carboxymethylaminomethyluridine(34) in tRNA(Leu) + S-adenosyl-L-methionine = 5-carboxymethylaminomethyl-2'-O-methyluridine(34) in tRNA(Leu) + S-adenosyl-L-homocysteine + H(+). Functionally, methylates the ribose at the nucleotide 34 wobble position in the two leucyl isoacceptors tRNA(Leu)(CmAA) and tRNA(Leu)(cmnm5UmAA). Catalyzes the methyl transfer from S-adenosyl-L-methionine to the 2'-OH of the wobble nucleotide. In Burkholderia cenocepacia (strain HI2424), this protein is tRNA (cytidine(34)-2'-O)-methyltransferase.